The following is a 625-amino-acid chain: Chaperone protein HtpG (625 aa).

The interval 1–341 (MERKEFKAES…SEDLSLNISR (341 aa)) is a; substrate-binding. The b stretch occupies residues 342–551 (EMLQHDRQLK…EGEVSIEMEK (210 aa)). A c region spans residues 552 to 625 (VLRAMPDNQN…FSNDICKVMA (74 aa)).

The protein belongs to the heat shock protein 90 family. As to quaternary structure, homodimer.

The protein localises to the cytoplasm. Functionally, molecular chaperone. Has ATPase activity. The chain is Chaperone protein HtpG from Halalkalibacterium halodurans (strain ATCC BAA-125 / DSM 18197 / FERM 7344 / JCM 9153 / C-125) (Bacillus halodurans).